The primary structure comprises 183 residues: Photosystem I assembly protein Ycf4 (183 aa).

The next 2 membrane-spanning stretches (helical) occupy residues Trp-23–Phe-43 and Val-64–Ile-84.

This sequence belongs to the Ycf4 family.

The protein localises to the plastid. It localises to the chloroplast thylakoid membrane. Seems to be required for the assembly of the photosystem I complex. This Stigeoclonium helveticum (Green alga) protein is Photosystem I assembly protein Ycf4.